The chain runs to 216 residues: Uracil phosphoribosyltransferase (216 aa).

5-phospho-alpha-D-ribose 1-diphosphate-binding positions include Arg85, Arg110, and 135 to 143; that span reads DPMVATGYS. Uracil-binding positions include Ile200 and 205-207; that span reads GDA. Residue Asp206 participates in 5-phospho-alpha-D-ribose 1-diphosphate binding.

Belongs to the UPRTase family. Requires Mg(2+) as cofactor.

The catalysed reaction is UMP + diphosphate = 5-phospho-alpha-D-ribose 1-diphosphate + uracil. It functions in the pathway pyrimidine metabolism; UMP biosynthesis via salvage pathway; UMP from uracil: step 1/1. Allosterically activated by GTP. Its function is as follows. Catalyzes the conversion of uracil and 5-phospho-alpha-D-ribose 1-diphosphate (PRPP) to UMP and diphosphate. The chain is Uracil phosphoribosyltransferase from Burkholderia mallei (strain NCTC 10247).